We begin with the raw amino-acid sequence, 422 residues long: UDP-N-acetylglucosamine 1-carboxyvinyltransferase (422 aa).

22-23 (KN) provides a ligand contact to phosphoenolpyruvate. UDP-N-acetyl-alpha-D-glucosamine is bound at residue Arg94. Residue Cys118 is the Proton donor of the active site. The residue at position 118 (Cys118) is a 2-(S-cysteinyl)pyruvic acid O-phosphothioketal. Residues 123-127 (RPIDL), Asp309, and Leu331 each bind UDP-N-acetyl-alpha-D-glucosamine.

Belongs to the EPSP synthase family. MurA subfamily.

The protein localises to the cytoplasm. The catalysed reaction is phosphoenolpyruvate + UDP-N-acetyl-alpha-D-glucosamine = UDP-N-acetyl-3-O-(1-carboxyvinyl)-alpha-D-glucosamine + phosphate. It functions in the pathway cell wall biogenesis; peptidoglycan biosynthesis. Its function is as follows. Cell wall formation. Adds enolpyruvyl to UDP-N-acetylglucosamine. This chain is UDP-N-acetylglucosamine 1-carboxyvinyltransferase, found in Sulfurimonas denitrificans (strain ATCC 33889 / DSM 1251) (Thiomicrospira denitrificans (strain ATCC 33889 / DSM 1251)).